The chain runs to 374 residues: Phosphatidylglycerol--prolipoprotein diacylglyceryl transferase (374 aa).

A run of 4 helical transmembrane segments spans residues 33–53 (ICFI…IALF), 155–175 (LCWF…VFFY), 195–215 (LASH…TSYI), and 222–242 (LSFL…AVFI). Arg243 contributes to the a 1,2-diacyl-sn-glycero-3-phospho-(1'-sn-glycerol) binding site. The next 3 membrane-spanning stretches (helical) occupy residues 279–299 (PVQL…FTLW), 306–326 (LAAG…RFLL), and 341–361 (ILQM…CLVW).

The protein belongs to the Lgt family.

Its subcellular location is the cell inner membrane. It carries out the reaction L-cysteinyl-[prolipoprotein] + a 1,2-diacyl-sn-glycero-3-phospho-(1'-sn-glycerol) = an S-1,2-diacyl-sn-glyceryl-L-cysteinyl-[prolipoprotein] + sn-glycerol 1-phosphate + H(+). The protein operates within protein modification; lipoprotein biosynthesis (diacylglyceryl transfer). Catalyzes the transfer of the diacylglyceryl group from phosphatidylglycerol to the sulfhydryl group of the N-terminal cysteine of a prolipoprotein, the first step in the formation of mature lipoproteins. This chain is Phosphatidylglycerol--prolipoprotein diacylglyceryl transferase, found in Protochlamydia amoebophila (strain UWE25).